Consider the following 550-residue polypeptide: Hydroxylamine reductase (550 aa).

Positions 3, 6, 18, and 25 each coordinate [2Fe-2S] cluster. Hybrid [4Fe-2O-2S] cluster contacts are provided by histidine 249, glutamate 273, cysteine 317, cysteine 405, cysteine 433, cysteine 458, glutamate 492, and lysine 494. Cysteine persulfide is present on cysteine 405.

Belongs to the HCP family. The cofactor is [2Fe-2S] cluster. Hybrid [4Fe-2O-2S] cluster serves as cofactor.

It localises to the cytoplasm. It catalyses the reaction A + NH4(+) + H2O = hydroxylamine + AH2 + H(+). Catalyzes the reduction of hydroxylamine to form NH(3) and H(2)O. The sequence is that of Hydroxylamine reductase from Escherichia coli O6:K15:H31 (strain 536 / UPEC).